Here is a 259-residue protein sequence, read N- to C-terminus: UPF0739 protein C1orf74 homolog (259 aa).

Belongs to the UPF0739 family.

The polypeptide is UPF0739 protein C1orf74 homolog (Danio rerio (Zebrafish)).